A 391-amino-acid polypeptide reads, in one-letter code: Pectate lyase B (391 aa).

The signal sequence occupies residues 1 to 30 (MKKTVRSLCSTALALTLGFTLLSGPASVQA). 3 residues coordinate Ca(2+): Asp181, Asp203, and Asp207. Residue Arg305 is part of the active site.

This sequence belongs to the polysaccharide lyase 1 family. Ca(2+) serves as cofactor.

It localises to the secreted. The enzyme catalyses Eliminative cleavage of (1-&gt;4)-alpha-D-galacturonan to give oligosaccharides with 4-deoxy-alpha-D-galact-4-enuronosyl groups at their non-reducing ends.. It carries out the reaction Eliminative cleavage of (1-&gt;4)-alpha-D-galacturonan methyl ester to give oligosaccharides with 4-deoxy-6-O-methyl-alpha-D-galact-4-enuronosyl groups at their non-reducing ends.. The protein operates within glycan metabolism; pectin degradation. Its function is as follows. Catalyzes the depolymerization of both polygalacturonate and pectins of various methyl esterification degree, with an endo mode of action. Shows the highest activity on 20 to 34% methylated pectin but retains 67%, 51%, 25%, and 1% of its maximum activity on polygalacturonate and 8.5%, 55 to 70%, and 90% methylated pectin, respectively. The chain is Pectate lyase B from Paenibacillus amylolyticus.